A 287-amino-acid chain; its full sequence is ATP synthase gamma chain (287 aa).

The protein belongs to the ATPase gamma chain family. F-type ATPases have 2 components, CF(1) - the catalytic core - and CF(0) - the membrane proton channel. CF(1) has five subunits: alpha(3), beta(3), gamma(1), delta(1), epsilon(1). CF(0) has three main subunits: a, b and c.

It localises to the cell inner membrane. In terms of biological role, produces ATP from ADP in the presence of a proton gradient across the membrane. The gamma chain is believed to be important in regulating ATPase activity and the flow of protons through the CF(0) complex. In Xanthomonas axonopodis pv. citri (strain 306), this protein is ATP synthase gamma chain.